A 324-amino-acid polypeptide reads, in one-letter code: MSGCCFSFAATASTSSTSLLYLFTQKPKFSVDHLSLSTYNTHFNFKINSTKLKAHFPISSLYRSSIFLSTCASVSDGVEVVQEDDEEEVALSAEEEEEIEEKEERVESESVEGGRLYVGNLPFSMTSSQLSEIFAEAGTVANVEIVYDRVTDRSRGFAFVTMGSVEEAKEAIRLFDGSQVGGRTVKVNFPEVPRGGEREVMSAKIRSTYQGFVDSPHKLYVANLSWALTSQGLRDAFADQPGFMSAKVIYDRSSGRSRGFGFITFSSAEAMNSALDTMNEVELEGRPLRLNVAGQKAPVSSPPVVETSPENDSDNSELLSSLSS.

The transit peptide at 1-71 (MSGCCFSFAA…YRSSIFLSTC (71 aa)) directs the protein to the chloroplast. RRM domains lie at 114–192 (GRLY…FPEV) and 217–296 (HKLY…AGQK). The segment at 294–324 (GQKAPVSSPPVVETSPENDSDNSELLSSLSS) is disordered. The segment covering 298-308 (PVSSPPVVETS) has biased composition (low complexity).

Its subcellular location is the plastid. It is found in the chloroplast. Could be involved in splicing and/or processing of chloroplast RNA's. The polypeptide is 33 kDa ribonucleoprotein, chloroplastic (Nicotiana sylvestris (Wood tobacco)).